The primary structure comprises 675 residues: Probable potassium transport system protein Kup (675 aa).

Basic and acidic residues predominate over residues methionine 1 to histidine 12. The segment at methionine 1 to aspartate 25 is disordered. 12 helical membrane passes run alanine 62–leucine 82, leucine 104–isoleucine 124, tryptophan 153–threonine 173, isoleucine 195–threonine 215, phenylalanine 222–phenylalanine 242, phenylalanine 255–valine 275, tryptophan 300–isoleucine 320, leucine 332–isoleucine 352, isoleucine 390–phenylalanine 410, alanine 419–phenylalanine 439, valine 450–leucine 470, and isoleucine 472–threonine 492.

It belongs to the HAK/KUP transporter (TC 2.A.72) family.

It localises to the cell inner membrane. It catalyses the reaction K(+)(in) + H(+)(in) = K(+)(out) + H(+)(out). Functionally, transport of potassium into the cell. Likely operates as a K(+):H(+) symporter. The sequence is that of Probable potassium transport system protein Kup from Gluconobacter oxydans (strain 621H) (Gluconobacter suboxydans).